Reading from the N-terminus, the 190-residue chain is Threonylcarbamoyl-AMP synthase (190 aa).

Residues 7–190 form the YrdC-like domain; sequence NFVLADIVRA…ALTGKRFRQG (184 aa).

This sequence belongs to the SUA5 family. TsaC subfamily.

It localises to the cytoplasm. It carries out the reaction L-threonine + hydrogencarbonate + ATP = L-threonylcarbamoyladenylate + diphosphate + H2O. Functionally, required for the formation of a threonylcarbamoyl group on adenosine at position 37 (t(6)A37) in tRNAs that read codons beginning with adenine. Catalyzes the conversion of L-threonine, HCO(3)(-)/CO(2) and ATP to give threonylcarbamoyl-AMP (TC-AMP) as the acyladenylate intermediate, with the release of diphosphate. In Yersinia pestis bv. Antiqua (strain Angola), this protein is Threonylcarbamoyl-AMP synthase.